We begin with the raw amino-acid sequence, 96 residues long: Small ribosomal subunit protein bS6 (96 aa).

Belongs to the bacterial ribosomal protein bS6 family.

In terms of biological role, binds together with bS18 to 16S ribosomal RNA. This is Small ribosomal subunit protein bS6 (rpsF) from Mycobacterium leprae (strain TN).